We begin with the raw amino-acid sequence, 137 residues long: Protein yippee-like F37A8.5 (137 aa).

Residues 1–20 (MHFRMKVLENSSKHNTPKKQ) form a disordered region. The Yippee domain maps to 32-129 (RCYSCIHCRA…IELAHMVKDN (98 aa)). Zn(2+) contacts are provided by cysteine 36, cysteine 39, cysteine 92, and cysteine 95.

The protein belongs to the yippee family.

This chain is Protein yippee-like F37A8.5, found in Caenorhabditis elegans.